The primary structure comprises 358 residues: DNA-directed RNA polymerase subunit alpha (358 aa).

Positions 1–231 (MIQNVTDDKI…NIFLSLSNSS (231 aa)) are alpha N-terminal domain (alpha-NTD). Residues 266–358 (QESLGWKKIS…LELINNKDIS (93 aa)) are alpha C-terminal domain (alpha-CTD).

The protein belongs to the RNA polymerase alpha chain family. As to quaternary structure, in plastids the minimal PEP RNA polymerase catalytic core is composed of four subunits: alpha, beta, beta', and beta''. When a (nuclear-encoded) sigma factor is associated with the core the holoenzyme is formed, which can initiate transcription.

The protein resides in the plastid. Its subcellular location is the chloroplast. The enzyme catalyses RNA(n) + a ribonucleoside 5'-triphosphate = RNA(n+1) + diphosphate. Its function is as follows. DNA-dependent RNA polymerase catalyzes the transcription of DNA into RNA using the four ribonucleoside triphosphates as substrates. The chain is DNA-directed RNA polymerase subunit alpha from Chara vulgaris (Common stonewort).